The chain runs to 612 residues: Dihydroxy-acid dehydratase (612 aa).

Residue D81 coordinates Mg(2+). Residue C122 participates in [2Fe-2S] cluster binding. Mg(2+) is bound by residues D123 and K124. K124 carries the N6-carboxylysine modification. C195 is a binding site for [2Fe-2S] cluster. E491 serves as a coordination point for Mg(2+). The Proton acceptor role is filled by S517.

This sequence belongs to the IlvD/Edd family. As to quaternary structure, homodimer. It depends on [2Fe-2S] cluster as a cofactor. Mg(2+) is required as a cofactor.

It carries out the reaction (2R)-2,3-dihydroxy-3-methylbutanoate = 3-methyl-2-oxobutanoate + H2O. The enzyme catalyses (2R,3R)-2,3-dihydroxy-3-methylpentanoate = (S)-3-methyl-2-oxopentanoate + H2O. The protein operates within amino-acid biosynthesis; L-isoleucine biosynthesis; L-isoleucine from 2-oxobutanoate: step 3/4. It participates in amino-acid biosynthesis; L-valine biosynthesis; L-valine from pyruvate: step 3/4. Functionally, functions in the biosynthesis of branched-chain amino acids. Catalyzes the dehydration of (2R,3R)-2,3-dihydroxy-3-methylpentanoate (2,3-dihydroxy-3-methylvalerate) into 2-oxo-3-methylpentanoate (2-oxo-3-methylvalerate) and of (2R)-2,3-dihydroxy-3-methylbutanoate (2,3-dihydroxyisovalerate) into 2-oxo-3-methylbutanoate (2-oxoisovalerate), the penultimate precursor to L-isoleucine and L-valine, respectively. The chain is Dihydroxy-acid dehydratase from Bartonella henselae (strain ATCC 49882 / DSM 28221 / CCUG 30454 / Houston 1) (Rochalimaea henselae).